Reading from the N-terminus, the 452-residue chain is Ribosomal protein uS12 methylthiotransferase RimO (452 aa).

The region spanning Pro5–Ser116 is the MTTase N-terminal domain. Residues Cys14, Cys50, Cys79, Cys154, Cys158, and Cys161 each coordinate [4Fe-4S] cluster. Residues Thr140–Arg369 form the Radical SAM core domain. Positions Arg372–Ser438 constitute a TRAM domain.

The protein belongs to the methylthiotransferase family. RimO subfamily. It depends on [4Fe-4S] cluster as a cofactor.

The protein resides in the cytoplasm. It catalyses the reaction L-aspartate(89)-[ribosomal protein uS12]-hydrogen + (sulfur carrier)-SH + AH2 + 2 S-adenosyl-L-methionine = 3-methylsulfanyl-L-aspartate(89)-[ribosomal protein uS12]-hydrogen + (sulfur carrier)-H + 5'-deoxyadenosine + L-methionine + A + S-adenosyl-L-homocysteine + 2 H(+). In terms of biological role, catalyzes the methylthiolation of an aspartic acid residue of ribosomal protein uS12. This chain is Ribosomal protein uS12 methylthiotransferase RimO, found in Synechococcus sp. (strain ATCC 27144 / PCC 6301 / SAUG 1402/1) (Anacystis nidulans).